The chain runs to 538 residues: Serine/threonine-protein phosphatase 5 (538 aa).

3 TPR repeats span residues 13–46, 48–80, and 81–114; these read AEEFKSQANEAFKGHKYSSAIDLYTKAIELNSNN, VYWANRAFAHTKLEEYGSAIQDASKAIEVDSRY, and SKGYYRRGAAYLAMGKFKDALKDFQQVKRLSPND. The next 2 helical transmembrane spans lie at 163–183 and 185–205; these read SSMPTKTALAAVVAAVMVVAV and GFATTEILMVLVSVVLGTFWW. The Mn(2+) site is built by D282, H284, D311, and N343. H344 serves as the catalytic Proton donor. Residues H392 and H467 each contribute to the Mn(2+) site.

The protein belongs to the PPP phosphatase family. PP-5 (PP-T) subfamily. In terms of assembly, interacts with PHYA and PHYB, mostly when they are phosphorylated and in Pfr forms. Mn(2+) is required as a cofactor.

Its subcellular location is the endoplasmic reticulum membrane. The protein resides in the nucleus membrane. The protein localises to the cytoplasm. It localises to the nucleus. It is found in the nucleoplasm. Its subcellular location is the nucleus speckle. It carries out the reaction O-phospho-L-seryl-[protein] + H2O = L-seryl-[protein] + phosphate. The catalysed reaction is O-phospho-L-threonyl-[protein] + H2O = L-threonyl-[protein] + phosphate. Its activity is regulated as follows. Activated by arachidonic acid (AA). Isoform 2 dephosphorylates phosphorylated phytochromes, with a preference toward Pfr forms, and enhances phytochrome-mediated photoresponses, probably by enhancing their stability and their binding affinity for light signal transducers such as NDPK2. Can use para-nitrophenylphosphate (pNPP) as substrate. The protein is Serine/threonine-protein phosphatase 5 (PAPP5) of Arabidopsis thaliana (Mouse-ear cress).